We begin with the raw amino-acid sequence, 655 residues long: p-hydroxybenzoic acid efflux pump subunit AaeB (655 aa).

Helical transmembrane passes span 13 to 33 (FAVK…HFQL), 38 to 58 (WAVL…GGEP), 69 to 89 (LRII…IAMI), 93 to 113 (LLMI…SSLV), 121 to 141 (WGLA…EPLL), 152 to 172 (EIVI…PRSI), 370 to 390 (LFWL…IAVV), 407 to 427 (FIYG…VIIP), 431 to 451 (QSML…GIEV), 455 to 475 (LLGS…DNPM), and 482 to 502 (FLDS…VILL).

The protein belongs to the aromatic acid exporter ArAE (TC 2.A.85) family.

Its subcellular location is the cell inner membrane. Forms an efflux pump with AaeA. Could function as a metabolic relief valve, allowing to eliminate certain compounds when they accumulate to high levels in the cell. The sequence is that of p-hydroxybenzoic acid efflux pump subunit AaeB from Shigella boydii serotype 4 (strain Sb227).